A 334-amino-acid polypeptide reads, in one-letter code: Biotin synthase (334 aa).

The region spanning 55–285 (GSSGSIHACS…VHPRKIIKIA (231 aa)) is the Radical SAM core domain. The [4Fe-4S] cluster site is built by Cys73, Cys77, and Cys80. [2Fe-2S] cluster is bound by residues Cys152, Cys213, and Lys283.

Belongs to the radical SAM superfamily. Biotin synthase family. Homodimer. It depends on [4Fe-4S] cluster as a cofactor. [2Fe-2S] cluster is required as a cofactor.

It catalyses the reaction (4R,5S)-dethiobiotin + (sulfur carrier)-SH + 2 reduced [2Fe-2S]-[ferredoxin] + 2 S-adenosyl-L-methionine = (sulfur carrier)-H + biotin + 2 5'-deoxyadenosine + 2 L-methionine + 2 oxidized [2Fe-2S]-[ferredoxin]. Its pathway is cofactor biosynthesis; biotin biosynthesis; biotin from 7,8-diaminononanoate: step 2/2. Functionally, catalyzes the conversion of dethiobiotin (DTB) to biotin by the insertion of a sulfur atom into dethiobiotin via a radical-based mechanism. This chain is Biotin synthase, found in Chlorobium phaeobacteroides (strain DSM 266 / SMG 266 / 2430).